Here is a 433-residue protein sequence, read N- to C-terminus: Sulfhydrylase FUB7 (433 aa).

An N6-(pyridoxal phosphate)lysine modification is found at lysine 211.

The protein belongs to the trans-sulfuration enzymes family. Pyridoxal 5'-phosphate serves as cofactor.

The protein operates within mycotoxin biosynthesis. Sulfhydrylase; part of the gene cluster that mediates the biosynthesis of fusaric acid, a mycotoxin with low to moderate toxicity to animals and humans, but with high phytotoxic properties. L-aspartate is suggested as fusaric acid amino acid precursor that is activated and further processed to O-acetyl-L-homoserine by cluster enzymes aspartate kinase FUB3 and homoserine O-acetyltransferase FUB5, as well as enzymes of the primary metabolism. The polyketide synthase (PKS) FUB1 generates the triketide trans-2-hexenal which is presumptively released by the hydrolase FUB4 and linked to the NRPS-bound amino acid precursor by NAD(P)-dependent dehydrogenase FUB6. FUB1, FUB4, and the non-canonical NRPS Fub8 may form an enzyme complex. Further processing of the NRPS-bound intermediate might be carried out by FUB6 and the sulfhydrylase FUB7, enabling a spontaneous electrocyclization to close the carbon backbone of fusaric acid. Dihydrofusaric acid is likely to be released via reduction by the thioester reductase (TR) domain of FUB8 whereupon the final oxidation to fusaric acid may (also) be performed by the FMN-dependent dehydrogenase FUB9. This chain is Sulfhydrylase FUB7, found in Fusarium oxysporum f. sp. lycopersici (strain 4287 / CBS 123668 / FGSC 9935 / NRRL 34936) (Fusarium vascular wilt of tomato).